Here is a 437-residue protein sequence, read N- to C-terminus: Enolase-related protein 1 (437 aa).

Positions 160 and 169 each coordinate substrate. Glu-212 (proton donor) is an active-site residue. Asp-247, Glu-296, and Asp-321 together coordinate Mg(2+). Residues Glu-296 and Asp-321 each coordinate substrate. The active-site Proton acceptor is the Lys-346. Residues 373-376 and Lys-397 contribute to the substrate site; that span reads SHRS.

It belongs to the enolase family. Mg(2+) serves as cofactor.

The enzyme catalyses (2R)-2-phosphoglycerate = phosphoenolpyruvate + H2O. It functions in the pathway carbohydrate degradation; glycolysis; pyruvate from D-glyceraldehyde 3-phosphate: step 4/5. In Saccharomyces cerevisiae (strain ATCC 204508 / S288c) (Baker's yeast), this protein is Enolase-related protein 1 (ERR1).